The chain runs to 280 residues: 4-deoxy-L-threo-5-hexosulose-uronate ketol-isomerase (280 aa).

Residues histidine 198, histidine 200, glutamate 205, and histidine 247 each coordinate Zn(2+).

It belongs to the KduI family. Zn(2+) is required as a cofactor.

The enzyme catalyses 5-dehydro-4-deoxy-D-glucuronate = 3-deoxy-D-glycero-2,5-hexodiulosonate. It participates in glycan metabolism; pectin degradation; 2-dehydro-3-deoxy-D-gluconate from pectin: step 4/5. Its function is as follows. Catalyzes the isomerization of 5-dehydro-4-deoxy-D-glucuronate to 3-deoxy-D-glycero-2,5-hexodiulosonate. The sequence is that of 4-deoxy-L-threo-5-hexosulose-uronate ketol-isomerase from Lachnospira eligens (strain ATCC 27750 / DSM 3376 / VPI C15-48 / C15-B4) (Eubacterium eligens).